The following is a 210-amino-acid chain: ATP phosphoribosyltransferase (210 aa).

Belongs to the ATP phosphoribosyltransferase family. Short subfamily. Heteromultimer composed of HisG and HisZ subunits.

Its subcellular location is the cytoplasm. It catalyses the reaction 1-(5-phospho-beta-D-ribosyl)-ATP + diphosphate = 5-phospho-alpha-D-ribose 1-diphosphate + ATP. The protein operates within amino-acid biosynthesis; L-histidine biosynthesis; L-histidine from 5-phospho-alpha-D-ribose 1-diphosphate: step 1/9. Catalyzes the condensation of ATP and 5-phosphoribose 1-diphosphate to form N'-(5'-phosphoribosyl)-ATP (PR-ATP). Has a crucial role in the pathway because the rate of histidine biosynthesis seems to be controlled primarily by regulation of HisG enzymatic activity. This chain is ATP phosphoribosyltransferase, found in Caldanaerobacter subterraneus subsp. tengcongensis (strain DSM 15242 / JCM 11007 / NBRC 100824 / MB4) (Thermoanaerobacter tengcongensis).